Consider the following 302-residue polypeptide: Citrate lyase subunit beta (302 aa).

Arg-69 and Glu-132 together coordinate substrate. The Mg(2+) site is built by Glu-132 and Asp-159.

Belongs to the HpcH/HpaI aldolase family. Citrate lyase beta subunit subfamily. As to quaternary structure, oligomer with a subunit composition of (alpha,beta,gamma)6. The cofactor is Mg(2+).

Its subcellular location is the cytoplasm. It carries out the reaction citrate = oxaloacetate + acetate. It catalyses the reaction (3S)-citryl-CoA = oxaloacetate + acetyl-CoA. Represents a citryl-ACP lyase. The polypeptide is Citrate lyase subunit beta (citE) (Leuconostoc mesenteroides subsp. cremoris).